Reading from the N-terminus, the 515-residue chain is RNA exonuclease NGL2 (515 aa).

2 disordered regions span residues 1 to 54 and 353 to 381; these read MTQD…SKPI and RDGE…PVPE. Residues 21–34 are compositionally biased toward basic and acidic residues; that stretch reads EINKSVKDAKHQTN. A compositionally biased stretch (basic residues) spans 40 to 52; the sequence is QHKKKGKKGKKSK. Positions 369-381 are enriched in basic and acidic residues; that stretch reads KYGKDQPESPVPE.

It belongs to the CCR4/nocturin family.

It localises to the cytoplasm. The protein resides in the nucleus. Its function is as follows. Involved in pre-rRNA processing. Required for the final stage of 3'-end maturation of 5.8S rRNA at site E. This Saccharomyces cerevisiae (strain ATCC 204508 / S288c) (Baker's yeast) protein is RNA exonuclease NGL2 (NGL2).